Here is a 543-residue protein sequence, read N- to C-terminus: Cytochrome P450 1B1 (543 aa).

C470 contributes to the heme binding site.

The protein belongs to the cytochrome P450 family. Heme serves as cofactor.

The protein resides in the endoplasmic reticulum membrane. Its subcellular location is the microsome membrane. It is found in the mitochondrion. It catalyses the reaction an organic molecule + reduced [NADPH--hemoprotein reductase] + O2 = an alcohol + oxidized [NADPH--hemoprotein reductase] + H2O + H(+). The enzyme catalyses 17beta-estradiol + reduced [NADPH--hemoprotein reductase] + O2 = 2-hydroxy-17beta-estradiol + oxidized [NADPH--hemoprotein reductase] + H2O + H(+). It carries out the reaction 17beta-estradiol + reduced [NADPH--hemoprotein reductase] + O2 = 4-hydroxy-17beta-estradiol + oxidized [NADPH--hemoprotein reductase] + H2O + H(+). The catalysed reaction is estrone + reduced [NADPH--hemoprotein reductase] + O2 = 2-hydroxyestrone + oxidized [NADPH--hemoprotein reductase] + H2O + H(+). It catalyses the reaction estrone + reduced [NADPH--hemoprotein reductase] + O2 = 4-hydroxyestrone + oxidized [NADPH--hemoprotein reductase] + H2O + H(+). The enzyme catalyses testosterone + reduced [NADPH--hemoprotein reductase] + O2 = 6beta,17beta-dihydroxyandrost-4-en-3-one + oxidized [NADPH--hemoprotein reductase] + H2O + H(+). It carries out the reaction progesterone + reduced [NADPH--hemoprotein reductase] + O2 = 6beta-hydroxyprogesterone + oxidized [NADPH--hemoprotein reductase] + H2O + H(+). The catalysed reaction is progesterone + reduced [NADPH--hemoprotein reductase] + O2 = 16alpha-hydroxyprogesterone + oxidized [NADPH--hemoprotein reductase] + H2O + H(+). It catalyses the reaction all-trans-retinol + reduced [NADPH--hemoprotein reductase] + O2 = all-trans-retinal + oxidized [NADPH--hemoprotein reductase] + 2 H2O + H(+). The enzyme catalyses all-trans-retinal + reduced [NADPH--hemoprotein reductase] + O2 = all-trans-retinoate + oxidized [NADPH--hemoprotein reductase] + H2O + 2 H(+). It carries out the reaction (5Z,8Z,11Z,14Z)-eicosatetraenoate + reduced [NADPH--hemoprotein reductase] + O2 = (8R,9S)-epoxy-(5Z,11Z,14Z)-eicosatrienoate + oxidized [NADPH--hemoprotein reductase] + H2O + H(+). The catalysed reaction is (5Z,8Z,11Z,14Z)-eicosatetraenoate + reduced [NADPH--hemoprotein reductase] + O2 = (11R,12S)-epoxy-(5Z,8Z,14Z)-eicosatrienoate + oxidized [NADPH--hemoprotein reductase] + H2O + H(+). It catalyses the reaction (5Z,8Z,11Z,14Z)-eicosatetraenoate + reduced [NADPH--hemoprotein reductase] + O2 = (11S,12R)-epoxy-(5Z,8Z,14Z)-eicosatrienoate + oxidized [NADPH--hemoprotein reductase] + H2O + H(+). The enzyme catalyses (5Z,8Z,11Z,14Z)-eicosatetraenoate + reduced [NADPH--hemoprotein reductase] + O2 = (14S,15R)-epoxy-(5Z,8Z,11Z)-eicosatrienoate + oxidized [NADPH--hemoprotein reductase] + H2O + H(+). It carries out the reaction (5Z,8Z,11Z,14Z)-eicosatetraenoate + reduced [NADPH--hemoprotein reductase] + O2 = (14R,15S)-epoxy-(5Z,8Z,11Z)-eicosatrienoate + oxidized [NADPH--hemoprotein reductase] + H2O + H(+). The catalysed reaction is (5S)-hydroperoxy-(6E,8Z,11Z,14Z)-eicosatetraenoate = 5-oxo-(6E,8Z,11Z,14Z)-eicosatetraenoate + H2O. It catalyses the reaction (12S)-hydroperoxy-(5Z,8Z,10E,14Z)-eicosatetraenoate = 12-oxo-(5Z,8Z,10E,14Z)-eicosatetraenoate + H2O. The enzyme catalyses (15S)-hydroperoxy-(5Z,8Z,11Z,13E)-eicosatetraenoate = 15-oxo-(5Z,8Z,11Z,13E)-eicosatetraenoate + H2O. It carries out the reaction (13S)-hydroperoxy-(9Z,11E)-octadecadienoate = 13-oxo-(9Z,11E)-octadecadienoate + H2O. The protein operates within steroid hormone biosynthesis. It participates in cofactor metabolism; retinol metabolism. Its pathway is lipid metabolism; arachidonate metabolism. Enzyme activity is increased by cytochrome b5. Enzyme activity is increased by liposomes containing anionic phospholipids, phosphatidic acid and cardiolipin. Inhibited by naringenin with an IC(50) of 5 uM. Its function is as follows. A cytochrome P450 monooxygenase involved in the metabolism of various endogenous substrates, including fatty acids, steroid hormones and vitamins. Mechanistically, uses molecular oxygen inserting one oxygen atom into a substrate, and reducing the second into a water molecule, with two electrons provided by NADPH via cytochrome P450 reductase (NADPH--hemoprotein reductase). Exhibits catalytic activity for the formation of hydroxyestrogens from 17beta-estradiol (E2), namely 2- and 4-hydroxy E2. Metabolizes testosterone and progesterone to B or D ring hydroxylated metabolites. May act as a major enzyme for all-trans retinoic acid biosynthesis in extrahepatic tissues. Catalyzes two successive oxidative transformation of all-trans retinol to all-trans retinal and then to the active form all-trans retinoic acid. Catalyzes the epoxidation of double bonds of certain PUFA. Converts arachidonic acid toward epoxyeicosatrienoic acid (EpETrE) regioisomers, 8,9-, 11,12-, and 14,15- EpETrE, that function as lipid mediators in the vascular system. Additionally, displays dehydratase activity toward oxygenated eicosanoids including hydroperoxyeicosatetraenoates (HpETEs). This activity is independent of cytochrome P450 reductase, NADPH, and O2. Also involved in the oxidative metabolism of xenobiotics, particularly converting polycyclic aromatic hydrocarbons and heterocyclic aryl amines procarcinogens to DNA-damaging products. Plays an important role in retinal vascular development. Under ambient/hyperoxic O2 conditions, promotes angiogenesis and capillary morphogenesis of retinal endothelial cells and pericytes, likely by metabolizing the oxygenated products symptomatic of oxidative stress. Also, contributes to oxidative homeostasis and ultrastructural organization and function of trabecular meshwork tissue through modulation of POSTN expression. In Rattus norvegicus (Rat), this protein is Cytochrome P450 1B1.